The chain runs to 357 residues: Histidinol-phosphate aminotransferase 1 (357 aa).

Lys217 bears the N6-(pyridoxal phosphate)lysine mark.

It belongs to the class-II pyridoxal-phosphate-dependent aminotransferase family. Histidinol-phosphate aminotransferase subfamily. Homodimer. Pyridoxal 5'-phosphate serves as cofactor.

The enzyme catalyses L-histidinol phosphate + 2-oxoglutarate = 3-(imidazol-4-yl)-2-oxopropyl phosphate + L-glutamate. It functions in the pathway amino-acid biosynthesis; L-histidine biosynthesis; L-histidine from 5-phospho-alpha-D-ribose 1-diphosphate: step 7/9. This chain is Histidinol-phosphate aminotransferase 1, found in Burkholderia lata (strain ATCC 17760 / DSM 23089 / LMG 22485 / NCIMB 9086 / R18194 / 383).